The sequence spans 331 residues: High-affinity nickel-transport protein NixA (331 aa).

7 helical membrane-spanning segments follow: residues 3–23, 77–97, 110–130, 184–204, 213–233, 259–279, and 302–322; these read LWFP…ALLF, MGHS…IAWA, VVGT…NAII, PVGF…LLAL, VVGM…FDTL, ITAL…FQVI, and DLGY…FFLW.

Belongs to the NiCoT transporter (TC 2.A.52) family.

It is found in the cell inner membrane. Its function is as follows. High-affinity nickel intake protein. Imports nickel ions in an energy-dependent fashion. Necessary for the expression of catalytically active urease. This Helicobacter pylori (strain J99 / ATCC 700824) (Campylobacter pylori J99) protein is High-affinity nickel-transport protein NixA (nixA).